The following is a 108-amino-acid chain: UPF0145 protein Patl_2194 (108 aa).

This sequence belongs to the UPF0145 family.

The polypeptide is UPF0145 protein Patl_2194 (Pseudoalteromonas atlantica (strain T6c / ATCC BAA-1087)).